Here is a 2193-residue protein sequence, read N- to C-terminus: Genome polyprotein (2193 aa).

Residues 1-22 (MGSQVSTQRSGSHENSNSASEG) form a disordered region. G2 carries N-myristoyl glycine; by host lipidation. Residues 2–1503 (GSQVSTQRSG…HLNRAVLIMQ (1502 aa)) are Cytoplasmic-facing. Amphipathic alpha-helix regions lie at residues 566–588 (GDGI…LTSL) and 568–588 (GIAD…LTSL). Active-site for protease 2A activity residues include H883 and D901. Positions 918 and 920 each coordinate Zn(2+). The For protease 2A activity role is filled by C972. Residues C978 and H980 each contribute to the Zn(2+) site. The tract at residues 1112–1184 (SASWLKKFND…EQSAASQEDL (73 aa)) is membrane-binding. The tract at residues 1112–1250 (SASWLKKFND…SPGTGKSLAT (139 aa)) is oligomerization. Positions 1133–1137 (SNKIS) are RNA-binding. One can recognise an SF3 helicase domain in the interval 1216–1374 (EKRMNNYMQF…YKTDLGRLDA (159 aa)). 1240–1247 (GSPGTGKS) contributes to the ATP binding site. Positions 1381, 1392, and 1397 each coordinate Zn(2+). The segment at 1381-1397 (CSENNTANFKRCSPLVC) adopts a C4-type; degenerate zinc-finger fold. An RNA-binding region spans residues 1424 to 1431 (EYNNRYAI). The oligomerization stretch occupies residues 1435–1440 (IEALFQ). The stretch at 1504 to 1519 (SIATVVAVVSLVYVIY) is an intramembrane region. Residues 1520–2193 (KLFAGFQGAY…NLRRNWLELF (674 aa)) are Cytoplasmic-facing. Y1529 bears the O-(5'-phospho-RNA)-tyrosine mark. Residues 1549 to 1727 (GPSLDFALSL…FCAGLKRSYF (179 aa)) form the Peptidase C3 domain. Catalysis depends on for protease 3C activity residues H1588, E1619, and C1695. In terms of domain architecture, RdRp catalytic spans 1958–2073 (GSLFAFDYSG…ASYPFPIDCL (116 aa)). Residues D1964 and D2060 each coordinate Mg(2+).

The protein belongs to the picornaviruses polyprotein family. Interacts with capsid protein VP1 and capsid protein VP3 to form heterotrimeric protomers. As to quaternary structure, interacts with capsid protein VP0, and capsid protein VP3 to form heterotrimeric protomers. Five protomers subsequently associate to form pentamers which serve as building blocks for the capsid. Interacts with capsid protein VP2, capsid protein VP3 and capsid protein VP4 following cleavage of capsid protein VP0. In terms of assembly, interacts with capsid protein VP1 and capsid protein VP3 in the mature capsid. Interacts with capsid protein VP0 and capsid protein VP1 to form heterotrimeric protomers. Five protomers subsequently associate to form pentamers which serve as building blocks for the capsid. Interacts with capsid protein VP4 in the mature capsid. Interacts with protein 2C; this interaction may be important for virion morphogenesis. As to quaternary structure, interacts with capsid protein VP1 and capsid protein VP3. In terms of assembly, homodimer. Homohexamer; forms a hexameric ring structure with 6-fold symmetry characteristic of AAA+ ATPases. Interacts (via N-terminus) with host RTN3 (via reticulon domain); this interaction is important for viral replication. Interacts with capsid protein VP3; this interaction may be important for virion morphogenesis. As to quaternary structure, interacts with protein 3CD. In terms of assembly, homodimer. Interacts with host GBF1. Interacts (via GOLD domain) with host ACBD3 (via GOLD domain); this interaction allows the formation of a viral protein 3A/ACBD3 heterotetramer with a 2:2 stoichiometry, which will stimulate the recruitment of host PI4KB in order to synthesize PI4P at the viral RNA replication sites. Interacts with RNA-directed RNA polymerase. As to quaternary structure, interacts with host IFIH1/MDA5; this interaction inhibits host IFIH1. In terms of assembly, interacts with protein 3AB and with RNA-directed RNA polymerase. Interacts with Viral protein genome-linked and with protein 3CD. Mg(2+) is required as a cofactor. Post-translationally, specific enzymatic cleavages in vivo by the viral proteases yield processing intermediates and the mature proteins. Myristoylation is required for the formation of pentamers during virus assembly. Further assembly of 12 pentamers and a molecule of genomic RNA generates the provirion. In terms of processing, during virion maturation, immature virions are rendered infectious following cleavage of VP0 into VP4 and VP2. This maturation seems to be an autocatalytic event triggered by the presence of RNA in the capsid and it is followed by a conformational change infectious virion. Post-translationally, myristoylation is required during RNA encapsidation and formation of the mature virus particle. VPg is uridylylated by the polymerase into VPg-pUpU. This acts as a nucleotide-peptide primer for the genomic RNA replication.

Its subcellular location is the virion. It localises to the host cytoplasm. The protein localises to the host cytoplasmic vesicle membrane. The protein resides in the host nucleus. It catalyses the reaction a ribonucleoside 5'-triphosphate + H2O = a ribonucleoside 5'-diphosphate + phosphate + H(+). The enzyme catalyses Selective cleavage of Tyr-|-Gly bond in the picornavirus polyprotein.. The catalysed reaction is RNA(n) + a ribonucleoside 5'-triphosphate = RNA(n+1) + diphosphate. It carries out the reaction Selective cleavage of Gln-|-Gly bond in the poliovirus polyprotein. In other picornavirus reactions Glu may be substituted for Gln, and Ser or Thr for Gly.. With respect to regulation, replication or transcription is subject to high level of random mutations by the nucleotide analog ribavirin. In terms of biological role, forms an icosahedral capsid of pseudo T=3 symmetry with capsid proteins VP2 and VP3. The capsid is 300 Angstroms in diameter, composed of 60 copies of each capsid protein and enclosing the viral positive strand RNA genome. Capsid protein VP1 mainly forms the vertices of the capsid. Capsid protein VP1 interacts with host cell receptor to provide virion attachment to target host cells. This attachment induces virion internalization. After binding to its receptor, the capsid undergoes conformational changes. Capsid protein VP1 N-terminus (that contains an amphipathic alpha-helix) and capsid protein VP4 are externalized. Together, they shape a pore in the host membrane through which viral genome is translocated to host cell cytoplasm. Forms an icosahedral capsid of pseudo T=3 symmetry with capsid proteins VP2 and VP3. The capsid is 300 Angstroms in diameter, composed of 60 copies of each capsid protein and enclosing the viral positive strand RNA genome. Functionally, lies on the inner surface of the capsid shell. After binding to the host receptor, the capsid undergoes conformational changes. Capsid protein VP4 is released, Capsid protein VP1 N-terminus is externalized, and together, they shape a pore in the host membrane through which the viral genome is translocated into the host cell cytoplasm. Its function is as follows. Component of immature procapsids, which is cleaved into capsid proteins VP4 and VP2 after maturation. Allows the capsid to remain inactive before the maturation step. In terms of biological role, cysteine protease that cleaves viral polyprotein and specific host proteins. It is responsible for the autocatalytic cleavage between the P1 and P2 regions, which is the first cleavage occurring in the polyprotein. Also cleaves the host translation initiation factor EIF4G1, in order to shut down the capped cellular mRNA translation. Inhibits the host nucleus-cytoplasm protein and RNA trafficking by cleaving host members of the nuclear pores. Counteracts stress granule formation probably by antagonizing its assembly or promoting its dissassembly. Cleaves and inhibits host IFIH1/MDA5, thereby inhibiting the type-I IFN production and the establishment of the antiviral state. Cleaves and inhibits host MAVS, thereby inhibiting the type-I IFN production and the establishment of the antiviral state. Plays an essential role in the virus replication cycle by acting as a viroporin. Creates a pore in the host endoplasmic reticulum and as a consequence releases Ca2+ in the cytoplasm of infected cell. In turn, high levels of cytoplasmic calcium may trigger membrane trafficking and transport of viral ER-associated proteins to viroplasms, sites of viral genome replication. Functionally, induces and associates with structural rearrangements of intracellular membranes. Displays RNA-binding, nucleotide binding and NTPase activities. May play a role in virion morphogenesis and viral RNA encapsidation by interacting with the capsid protein VP3. Its function is as follows. Localizes the viral replication complex to the surface of membranous vesicles. Together with protein 3CD binds the Cis-Active RNA Element (CRE) which is involved in RNA synthesis initiation. Acts as a cofactor to stimulate the activity of 3D polymerase, maybe through a nucleid acid chaperone activity. In terms of biological role, localizes the viral replication complex to the surface of membranous vesicles. It inhibits host cell endoplasmic reticulum-to-Golgi apparatus transport and causes the disassembly of the Golgi complex, possibly through GBF1 interaction. This would result in depletion of MHC, trail receptors and IFN receptors at the host cell surface. Plays an essential role in viral RNA replication by recruiting ACBD3 and PI4KB at the viral replication sites, thereby allowing the formation of the rearranged membranous structures where viral replication takes place. Acts as a primer for viral RNA replication and remains covalently bound to viral genomic RNA. VPg is uridylylated prior to priming replication into VPg-pUpU. The oriI viral genomic sequence may act as a template for this. The VPg-pUpU is then used as primer on the genomic RNA poly(A) by the RNA-dependent RNA polymerase to replicate the viral genome. During genome replication, the VPg-RNA linkage is removed by the host TDP2, thereby accelerating replication. During the late stage of the replication cycle, host TDP2 is excluded from sites of viral RNA synthesis and encapsidation, allowing for the generation of progeny virions. Functionally, involved in the viral replication complex and viral polypeptide maturation. It exhibits protease activity with a specificity and catalytic efficiency that is different from protease 3C. Protein 3CD lacks polymerase activity. Protein 3CD binds to the 5'UTR of the viral genome. Its function is as follows. Major viral protease that mediates proteolytic processing of the polyprotein. Cleaves host EIF5B, contributing to host translation shutoff. Also cleaves host PABPC1, contributing to host translation shutoff. Binds and inhibits host IFIH1/MDA5, thereby inhibiting the type-I IFN production and the establishment of the antiviral state. Cleaves host MAP3K7/TAK1, resulting in inhibition of TRAF6-triggered NF-kappa-B induction. Cleaves host NLRP1, triggers host N-glycine-mediated degradation of the autoinhibitory NLRP1 N-terminal fragment. In terms of biological role, replicates the viral genomic RNA on the surface of intracellular membranes. May form linear arrays of subunits that propagate along a strong head-to-tail interaction called interface-I. Covalently attaches UMP to a tyrosine of VPg, which is used to prime RNA synthesis. The positive stranded RNA genome is first replicated at virus induced membranous vesicles, creating a dsRNA genomic replication form. This dsRNA is then used as template to synthesize positive stranded RNA genomes. ss(+)RNA genomes are either translated, replicated or encapsidated. The polypeptide is Genome polyprotein (Homo sapiens (Human)).